Consider the following 750-residue polypeptide: Small G protein signaling modulator 3 (750 aa).

Positions 114–305 (GIPHGMRPQL…RIWDLFFYEG (192 aa)) constitute a Rab-GAP TBC domain. At Ser406 the chain carries Phosphoserine. Positions 415-439 (EDDLEALKAKNIKQTELVADLREAI) form a coiled coil. Positions 480-539 (SHRRRAKALLDFERHDDDELGFRKNDIITIISQKDEHCWVGELNGLRGWFPAKFVEVLDE) constitute an SH3 domain. The region spanning 555–718 (GVTDLVRGTL…FAFSLSQDWE (164 aa)) is the RUN domain.

It belongs to the small G protein signaling modulator family. In terms of assembly, interacts with GJA1. Interaction with GJA1 induces its degradation. Interacts via its RUN domain with the C-terminal region of NF2. Interacts with RAB3A, RAB4A, RAB5A, RAB8A, RAB11A, RAP1A, RAP1B, RAP2A, RAP2B and PDCD6I. No interaction with RAB27A. Widely expressed.

The protein localises to the cytoplasm. May play a cooperative role in NF2-mediated growth suppression of cells. The sequence is that of Small G protein signaling modulator 3 from Mus musculus (Mouse).